Consider the following 101-residue polypeptide: Urease subunit beta (101 aa).

It belongs to the urease beta subunit family. In terms of assembly, heterotrimer of UreA (gamma), UreB (beta) and UreC (alpha) subunits. Three heterotrimers associate to form the active enzyme.

It is found in the cytoplasm. The enzyme catalyses urea + 2 H2O + H(+) = hydrogencarbonate + 2 NH4(+). It participates in nitrogen metabolism; urea degradation; CO(2) and NH(3) from urea (urease route): step 1/1. This Albidiferax ferrireducens (strain ATCC BAA-621 / DSM 15236 / T118) (Rhodoferax ferrireducens) protein is Urease subunit beta.